Here is an 81-residue protein sequence, read N- to C-terminus: Conotoxin Lt6.4 (81 aa).

A signal peptide spans 1 to 19 (MKLVLAIVLILMFLSLSAG). A propeptide spanning residues 20–42 (AETSDNGVSRGGHRPQYWPVTPP) is cleaved from the precursor. Disulfide bonds link Cys46–Cys60, Cys53–Cys65, and Cys59–Cys80.

It belongs to the conotoxin I3 superfamily. In terms of tissue distribution, expressed by the venom duct.

It is found in the secreted. The chain is Conotoxin Lt6.4 from Conus litteratus (Lettered cone).